We begin with the raw amino-acid sequence, 135 residues long: Small ribosomal subunit protein uS11 (135 aa).

A compositionally biased stretch (polar residues) spans 1–10 (MPPKSRTATA). 2 disordered regions span residues 1–27 (MPPKSRTATASRKPRRKEKKNVAHGHA) and 114–135 (GAIQDVTPSPHNGCRPPKRRRV). Residues 12–27 (RKPRRKEKKNVAHGHA) show a composition bias toward basic residues.

It belongs to the universal ribosomal protein uS11 family. In terms of assembly, part of the 30S ribosomal subunit. Interacts with proteins S7 and S18. Binds to IF-3.

Located on the platform of the 30S subunit, it bridges several disparate RNA helices of the 16S rRNA. Forms part of the Shine-Dalgarno cleft in the 70S ribosome. The polypeptide is Small ribosomal subunit protein uS11 (Kineococcus radiotolerans (strain ATCC BAA-149 / DSM 14245 / SRS30216)).